The sequence spans 207 residues: Outer-membrane lipoprotein carrier protein (207 aa).

Positions 1-21 (MRAIRMLLVSALALGTVTAYA) are cleaved as a signal peptide.

Belongs to the LolA family. As to quaternary structure, monomer.

The protein localises to the periplasm. Participates in the translocation of lipoproteins from the inner membrane to the outer membrane. Only forms a complex with a lipoprotein if the residue after the N-terminal Cys is not an aspartate (The Asp acts as a targeting signal to indicate that the lipoprotein should stay in the inner membrane). The protein is Outer-membrane lipoprotein carrier protein of Pseudomonas putida (strain GB-1).